We begin with the raw amino-acid sequence, 686 residues long: Probable metal-nicotianamine transporter YSL4 (686 aa).

14 consecutive transmembrane segments (helical) span residues 27–47 (WLVT…FCFV), 53–73 (MMTG…FFLL), 96–116 (MFLI…GFAT), 151–171 (FFLI…IMII), 203–223 (VMTI…QWFY), 264–284 (IVNF…YPYL), 308–328 (VFIS…ILVT), 373–393 (IPMF…MVAM), 405–425 (VGVL…ATGL), 441–461 (IFAA…VSGI), 488–508 (AMIA…PCIF), 554–574 (CVEL…LVLV), 596–616 (FFAG…LLLW), and 629–649 (AAVA…SALL).

Belongs to the YSL (TC 2.A.67.2) family.

Its subcellular location is the membrane. Functionally, may be involved in the transport of nicotianamine-chelated metals. This Oryza sativa subsp. japonica (Rice) protein is Probable metal-nicotianamine transporter YSL4 (YSL4).